The following is a 318-amino-acid chain: Glycine--tRNA ligase alpha subunit (318 aa).

This sequence belongs to the class-II aminoacyl-tRNA synthetase family. In terms of assembly, tetramer of two alpha and two beta subunits.

It localises to the cytoplasm. It carries out the reaction tRNA(Gly) + glycine + ATP = glycyl-tRNA(Gly) + AMP + diphosphate. The protein is Glycine--tRNA ligase alpha subunit of Methylibium petroleiphilum (strain ATCC BAA-1232 / LMG 22953 / PM1).